The sequence spans 1028 residues: Contactin-6 (1028 aa).

Positions 1–19 (MRLLWKLVILLPLINSSAG) are cleaved as a signal peptide. Ig-like C2-type domains follow at residues 26-117 (PIFT…AKLQ), 122-208 (EDFE…RSVQ), 227-308 (PKIE…RNLA), 318-402 (PEWE…AELR), 408-495 (PDFS…GSLI), and 499-587 (RTVI…ESLS). 6 disulfides stabilise this stretch: C50-C100, C144-C196, C249-C297, C339-C386, C431-C479, and C521-C577. Residues N65 and N193 are each glycosylated (N-linked (GlcNAc...) asparagine). N-linked (GlcNAc...) asparagine glycosylation is found at N368, N377, and N468. 4 consecutive Fibronectin type-III domains span residues 600–698 (PPED…TKAS), 703–800 (APVN…SGED), 805–901 (APRG…TKKS), and 902–996 (PPSQ…KMSS). 4 N-linked (GlcNAc...) asparagine glycosylation sites follow: N659, N765, N860, and N865. Y882 carries the phosphotyrosine modification. Polar residues predominate over residues 887–902 (TGPSSPPVNVTTKKSP). The tract at residues 887–908 (TGPSSPPVNVTTKKSPPSQPPA) is disordered. 4 N-linked (GlcNAc...) asparagine glycosylation sites follow: N895, N931, N956, and N957. S999 carries the GPI-anchor amidated serine lipid modification. The propeptide at 1000-1028 (RGIQFLEPSTHFLSIVIVIFHCFAIQPLI) is removed in mature form.

It belongs to the immunoglobulin superfamily. Contactin family. As to quaternary structure, interacts with PTPRG. In terms of tissue distribution, expressed in nervous system. Highly expressed in cerebellum. Expressed at intermediate level in thalamus, subthalamic nucleus. Weakly expressed in corpus callosum, caudate nucleus and spinal cord.

The protein resides in the cell membrane. Contactins mediate cell surface interactions during nervous system development. Participates in oligodendrocytes generation by acting as a ligand of NOTCH1. Its association with NOTCH1 promotes NOTCH1 activation through the released notch intracellular domain (NICD) and subsequent translocation to the nucleus. Involved in motor coordination. The chain is Contactin-6 (CNTN6) from Homo sapiens (Human).